The primary structure comprises 104 residues: Inclusion membrane protein F (104 aa).

Transmembrane regions (helical) follow at residues 39–59 and 70–90; these read LVVA…SLVA and LAVL…VLFI.

The protein resides in the secreted. It is found in the host vacuole. The protein localises to the host pathogen-containing vacuole. It localises to the host pathogen-containing vacuole membrane. In terms of biological role, inclusion membrane protein probably involved in early modification events of the chlamydial inclusion. This Chlamydia trachomatis serovar D (strain ATCC VR-885 / DSM 19411 / UW-3/Cx) protein is Inclusion membrane protein F (incF).